The primary structure comprises 846 residues: Arsenate respiratory reductase molybdopterin-containing subunit ArrA (846 aa).

The tat-type signal signal peptide spans 1–29 (MRIKRREFLKASAAVGAVAVASPTLNAFA). The 4Fe-4S Mo/W bis-MGD-type domain occupies 43-99 (GKWIPSTCQGCTTWCPVEFLFRMAVRSKYAATQLSKANNGYCCVRGHLMLQQLYDPD). Residues Cys-50, Cys-53, Cys-57, and Cys-85 each coordinate [4Fe-4S] cluster. Residue Arg-155 participates in arsenite binding. Tyr-156 lines the arsenate pocket. His-179 contacts arsenite. Ser-180 contributes to the arsenate binding site. A Mo-bis(molybdopterin guanine dinucleotide)-binding site is contributed by Cys-183. Lys-188 contacts arsenate. Tyr-200 serves as a coordination point for arsenite.

The protein belongs to the prokaryotic molybdopterin-containing oxidoreductase family. In terms of assembly, heterodimer composed of one large subunit (ArrA) and one small subunit (ArrB). [4Fe-4S] cluster is required as a cofactor. Mo-bis(molybdopterin guanine dinucleotide) serves as cofactor. Post-translationally, predicted to be exported by the Tat system. The position of the signal peptide cleavage has been experimentally proven.

The protein localises to the periplasm. It catalyses the reaction arsenite + A + H2O = arsenate + AH2 + H(+). Its function is as follows. Component of the arsenate respiratory reductase (Arr) complex, which catalyzes the reduction of arsenate (As(V)) to arsenite (As(III)). Can use acetate as the electron donor. ArrA is the arsenate-binding subunit. In Chrysiogenes arsenatis, this protein is Arsenate respiratory reductase molybdopterin-containing subunit ArrA.